A 282-amino-acid polypeptide reads, in one-letter code: Probable phosphatase C1620.13 (282 aa).

The active-site Tele-phosphohistidine intermediate is the His61. Glu135 acts as the Proton donor/acceptor in catalysis.

The protein belongs to the phosphoglycerate mutase family. BPG-dependent PGAM subfamily.

It is found in the nucleus. The chain is Probable phosphatase C1620.13 from Schizosaccharomyces pombe (strain 972 / ATCC 24843) (Fission yeast).